Reading from the N-terminus, the 436-residue chain is UDP-N-acetylmuramate--L-alanine ligase (436 aa).

Residue 108 to 114 coordinates ATP; the sequence is GAHGKTS.

The protein belongs to the MurCDEF family.

The protein localises to the cytoplasm. It carries out the reaction UDP-N-acetyl-alpha-D-muramate + L-alanine + ATP = UDP-N-acetyl-alpha-D-muramoyl-L-alanine + ADP + phosphate + H(+). The protein operates within cell wall biogenesis; peptidoglycan biosynthesis. Cell wall formation. In Bacillus cereus (strain ZK / E33L), this protein is UDP-N-acetylmuramate--L-alanine ligase.